The sequence spans 153 residues: NADPH-dependent 7-cyano-7-deazaguanine reductase (153 aa).

Residues 1–17 (MTDTRNLTQLGSKTQAP) are compositionally biased toward polar residues. The interval 1–23 (MTDTRNLTQLGSKTQAPASPEAA) is disordered. Residue Cys-51 is the Thioimide intermediate of the active site. Catalysis depends on Asp-58, which acts as the Proton donor. Substrate contacts are provided by residues 73-75 (VES) and 92-93 (HE).

This sequence belongs to the GTP cyclohydrolase I family. QueF type 1 subfamily.

The protein localises to the cytoplasm. It catalyses the reaction 7-aminomethyl-7-carbaguanine + 2 NADP(+) = 7-cyano-7-deazaguanine + 2 NADPH + 3 H(+). Its pathway is tRNA modification; tRNA-queuosine biosynthesis. Catalyzes the NADPH-dependent reduction of 7-cyano-7-deazaguanine (preQ0) to 7-aminomethyl-7-deazaguanine (preQ1). This chain is NADPH-dependent 7-cyano-7-deazaguanine reductase, found in Chelativorans sp. (strain BNC1).